A 507-amino-acid chain; its full sequence is AMP phosphorylase (507 aa).

AMP is bound by residues Gly168, 194-199 (SRAITG), and Thr203. Asp256 serves as the catalytic Proton donor. AMP-binding residues include Ser264 and Lys288.

Belongs to the thymidine/pyrimidine-nucleoside phosphorylase family. Type 2 subfamily.

It catalyses the reaction AMP + phosphate = alpha-D-ribose 1,5-bisphosphate + adenine. The enzyme catalyses CMP + phosphate = cytosine + alpha-D-ribose 1,5-bisphosphate. The catalysed reaction is UMP + phosphate = alpha-D-ribose 1,5-bisphosphate + uracil. Functionally, catalyzes the conversion of AMP and phosphate to adenine and ribose 1,5-bisphosphate (R15P). Exhibits phosphorylase activity toward CMP and UMP in addition to AMP. Functions in an archaeal AMP degradation pathway, together with R15P isomerase and RubisCO. In Methanosarcina mazei (strain ATCC BAA-159 / DSM 3647 / Goe1 / Go1 / JCM 11833 / OCM 88) (Methanosarcina frisia), this protein is AMP phosphorylase.